The following is a 298-amino-acid chain: Quinolinate synthase (298 aa).

Residues His19 and Ser36 each contribute to the iminosuccinate site. Cys81 lines the [4Fe-4S] cluster pocket. Iminosuccinate is bound by residues Tyr107–Asn109 and Ser124. Cys168 contributes to the [4Fe-4S] cluster binding site. Residues His193 to Glu195 and Thr210 contribute to the iminosuccinate site. Cys254 lines the [4Fe-4S] cluster pocket.

It belongs to the quinolinate synthase family. Type 2 subfamily. Requires [4Fe-4S] cluster as cofactor.

It is found in the cytoplasm. The enzyme catalyses iminosuccinate + dihydroxyacetone phosphate = quinolinate + phosphate + 2 H2O + H(+). The protein operates within cofactor biosynthesis; NAD(+) biosynthesis; quinolinate from iminoaspartate: step 1/1. Its activity is regulated as follows. Inhibited by 4,5 dithiohydroxyphthalic acid (DTHPA) analogs, which bind to the catalytic iron site of the [4Fe-4S] cluster. Catalyzes the condensation of iminoaspartate with dihydroxyacetone phosphate to form quinolinate. This chain is Quinolinate synthase, found in Thermotoga maritima (strain ATCC 43589 / DSM 3109 / JCM 10099 / NBRC 100826 / MSB8).